Here is a 555-residue protein sequence, read N- to C-terminus: Glutamine--tRNA ligase (555 aa).

Residues 34–44 (PEPNGYLHIGH) carry the 'HIGH' region motif. Residues 35 to 37 (EPN) and 41 to 47 (HIGHAKS) contribute to the ATP site. L-glutamine is bound by residues D67 and Y212. Residues T231, 261–262 (RL), and 269–271 (MSK) each bind ATP. The 'KMSKS' region signature appears at 268-272 (IMSKR).

This sequence belongs to the class-I aminoacyl-tRNA synthetase family. As to quaternary structure, monomer.

It is found in the cytoplasm. The enzyme catalyses tRNA(Gln) + L-glutamine + ATP = L-glutaminyl-tRNA(Gln) + AMP + diphosphate. This chain is Glutamine--tRNA ligase, found in Yersinia pseudotuberculosis serotype O:3 (strain YPIII).